An 86-amino-acid chain; its full sequence is Sec-independent protein translocase protein TatA (86 aa).

The helical transmembrane segment at Met-1–Ala-21 threads the bilayer.

This sequence belongs to the TatA/E family. The Tat system comprises two distinct complexes: a TatABC complex, containing multiple copies of TatA, TatB and TatC subunits, and a separate TatA complex, containing only TatA subunits. Substrates initially bind to the TatABC complex, which probably triggers association of the separate TatA complex to form the active translocon.

It localises to the cell inner membrane. Functionally, part of the twin-arginine translocation (Tat) system that transports large folded proteins containing a characteristic twin-arginine motif in their signal peptide across membranes. TatA could form the protein-conducting channel of the Tat system. This chain is Sec-independent protein translocase protein TatA, found in Hydrogenovibrio crunogenus (strain DSM 25203 / XCL-2) (Thiomicrospira crunogena).